Consider the following 467-residue polypeptide: ATP synthase subunit beta (467 aa).

Residue Gly150 to Thr157 participates in ATP binding.

Belongs to the ATPase alpha/beta chains family. As to quaternary structure, F-type ATPases have 2 components, CF(1) - the catalytic core - and CF(0) - the membrane proton channel. CF(1) has five subunits: alpha(3), beta(3), gamma(1), delta(1), epsilon(1). CF(0) has three main subunits: a(1), b(2) and c(9-12). The alpha and beta chains form an alternating ring which encloses part of the gamma chain. CF(1) is attached to CF(0) by a central stalk formed by the gamma and epsilon chains, while a peripheral stalk is formed by the delta and b chains.

It localises to the cell inner membrane. It carries out the reaction ATP + H2O + 4 H(+)(in) = ADP + phosphate + 5 H(+)(out). Functionally, produces ATP from ADP in the presence of a proton gradient across the membrane. The catalytic sites are hosted primarily by the beta subunits. The chain is ATP synthase subunit beta from Polaromonas sp. (strain JS666 / ATCC BAA-500).